The following is a 668-amino-acid chain: Macrolide export ATP-binding/permease protein MacB 1/2 (668 aa).

Residues I9 to Q247 form the ABC transporter domain. Residue G45–S52 coordinates ATP. The disordered stretch occupies residues R230 to A257. Residues D237 to V255 show a composition bias toward pro residues. The next 4 helical transmembrane spans lie at F294–G314, L541–M561, L598–F618, and M634–V654.

This sequence belongs to the ABC transporter superfamily. Macrolide exporter (TC 3.A.1.122) family. As to quaternary structure, homodimer.

Its subcellular location is the cell inner membrane. Its function is as follows. Non-canonical ABC transporter that contains transmembrane domains (TMD), which form a pore in the inner membrane, and an ATP-binding domain (NBD), which is responsible for energy generation. Confers resistance against macrolides. This chain is Macrolide export ATP-binding/permease protein MacB 1/2, found in Paracoccus denitrificans (strain Pd 1222).